A 383-amino-acid chain; its full sequence is PqqA peptide cyclase (383 aa).

Residues 11–226 (PGPPLWLLAE…TNQWREKLAA (216 aa)) form the Radical SAM core domain. The [4Fe-4S] cluster site is built by Cys25, Cys29, and Cys32.

The protein belongs to the radical SAM superfamily. PqqE family. In terms of assembly, interacts with PqqD. The interaction is necessary for activity of PqqE. [4Fe-4S] cluster is required as a cofactor.

The catalysed reaction is [PQQ precursor protein] + S-adenosyl-L-methionine = E-Y cross-linked-[PQQ precursor protein] + 5'-deoxyadenosine + L-methionine + H(+). The protein operates within cofactor biosynthesis; pyrroloquinoline quinone biosynthesis. Catalyzes the cross-linking of a glutamate residue and a tyrosine residue in the PqqA protein as part of the biosynthesis of pyrroloquinoline quinone (PQQ). This is PqqA peptide cyclase from Azotobacter vinelandii (strain DJ / ATCC BAA-1303).